A 279-amino-acid polypeptide reads, in one-letter code: Nucleotide-binding protein THA_1518 (279 aa).

Residue 9–16 (GLSGAGKS) participates in ATP binding. 57-60 (DARS) contacts GTP.

This sequence belongs to the RapZ-like family.

Its function is as follows. Displays ATPase and GTPase activities. This chain is Nucleotide-binding protein THA_1518, found in Thermosipho africanus (strain TCF52B).